A 100-amino-acid chain; its full sequence is uncharacterized protein (100 aa).

Residues 1–100 (MEPIEVFKAL…KLADFLKTEI (100 aa)) form the HTH arsR-type domain. The H-T-H motif DNA-binding region spans 44–67 (VSQITDKLKMTQSTASQYLTILLR).

This is an uncharacterized protein from Bacillus subtilis (strain 168).